A 108-amino-acid polypeptide reads, in one-letter code: ATP synthase peripheral stalk subunit F6, mitochondrial (108 aa).

A mitochondrion-targeting transit peptide spans 1 to 32 (MILQRLFRLSSAVQSAISVSWRRNIGITAVAF). Lys-41, Lys-46, and Lys-79 each carry N6-acetyllysine. 2 positions are modified to N6-acetyllysine; alternate: Lys-84 and Lys-99. An N6-succinyllysine; alternate mark is found at Lys-84 and Lys-99. Lys-105 carries the N6-acetyllysine modification. The residue at position 108 (Ser-108) is a Phosphoserine.

Belongs to the eukaryotic ATPase subunit F6 family. As to quaternary structure, component of the ATP synthase complex composed at least of ATP5F1A/subunit alpha, ATP5F1B/subunit beta, ATP5MC1/subunit c (homooctomer), MT-ATP6/subunit a, MT-ATP8/subunit 8, ATP5ME/subunit e, ATP5MF/subunit f, ATP5MG/subunit g, ATP5MK/subunit k, ATP5MJ/subunit j, ATP5F1C/subunit gamma, ATP5F1D/subunit delta, ATP5F1E/subunit epsilon, ATP5PF/subunit F6, ATP5PB/subunit b, ATP5PD/subunit d, ATP5PO/subunit OSCP. ATP synthase complex consists of a soluble F(1) head domain (subunits alpha(3) and beta(3)) - the catalytic core - and a membrane F(0) domain - the membrane proton channel (subunits c, a, 8, e, f, g, k and j). These two domains are linked by a central stalk (subunits gamma, delta, and epsilon) rotating inside the F1 region and a stationary peripheral stalk (subunits F6, b, d, and OSCP).

Its subcellular location is the mitochondrion. It is found in the mitochondrion inner membrane. In terms of biological role, subunit F6, of the mitochondrial membrane ATP synthase complex (F(1)F(0) ATP synthase or Complex V) that produces ATP from ADP in the presence of a proton gradient across the membrane which is generated by electron transport complexes of the respiratory chain. ATP synthase complex consist of a soluble F(1) head domain - the catalytic core - and a membrane F(1) domain - the membrane proton channel. These two domains are linked by a central stalk rotating inside the F(1) region and a stationary peripheral stalk. During catalysis, ATP synthesis in the catalytic domain of F(1) is coupled via a rotary mechanism of the central stalk subunits to proton translocation. In vivo, can only synthesize ATP although its ATP hydrolase activity can be activated artificially in vitro. Part of the complex F(0) domain. Part of the complex F(0) domain and the peripheric stalk, which acts as a stator to hold the catalytic alpha(3)beta(3) subcomplex and subunit a/ATP6 static relative to the rotary elements. The protein is ATP synthase peripheral stalk subunit F6, mitochondrial of Bos taurus (Bovine).